The chain runs to 895 residues: DNA mismatch repair protein MutS (895 aa).

Residue 607 to 614 (GPNMSGKS) participates in ATP binding.

Belongs to the DNA mismatch repair MutS family.

Its function is as follows. This protein is involved in the repair of mismatches in DNA. It is possible that it carries out the mismatch recognition step. This protein has a weak ATPase activity. This is DNA mismatch repair protein MutS from Bacillus cytotoxicus (strain DSM 22905 / CIP 110041 / 391-98 / NVH 391-98).